A 176-amino-acid polypeptide reads, in one-letter code: Disulfide bond formation protein B (176 aa).

The Cytoplasmic segment spans residues 1 to 14 (MLRFLNQCSRGRGA). Residues 15–31 (WLLMAFTALALEMVALW) traverse the membrane as a helical segment. The Periplasmic segment spans residues 32-49 (FQHVMLLKPCVLCIYERC). A disulfide bond links C41 and C44. Residues 50–65 (ALFGVMGAGLVGAIAP) traverse the membrane as a helical segment. Residues 66–71 (KTPLRY) lie on the Cytoplasmic side of the membrane. The chain crosses the membrane as a helical span at residues 72 to 89 (VAMVIWIYSAWRGLQLAY). At 90–144 (EHTMIQLHPSPFMTCDFMARFPDWLPLGKWLPQVFVASGDCAERQWSFLTLEMPQ) the chain is on the periplasmic side. The cysteines at positions 104 and 130 are disulfide-linked. Residues 145–163 (WLLGIFAAYLVVAIAVVIA) form a helical membrane-spanning segment. At 164–176 (QAFKPKKRDLFGR) the chain is on the cytoplasmic side.

Belongs to the DsbB family.

It localises to the cell inner membrane. Functionally, required for disulfide bond formation in some periplasmic proteins. Acts by oxidizing the DsbA protein. The protein is Disulfide bond formation protein B of Salmonella paratyphi A (strain ATCC 9150 / SARB42).